Reading from the N-terminus, the 171-residue chain is KRAB domain-containing protein 4 (171 aa).

Residues 8–79 enclose the KRAB domain; that stretch reads LTFKDVFVDF…DGGTPVRTCA (72 aa).

Expressed in brain, ovary, testis, prostate, tonsil, heart, bone marrow, colon, breast and kidney.

In Homo sapiens (Human), this protein is KRAB domain-containing protein 4 (KRBOX4).